The chain runs to 445 residues: tRNA modification GTPase MnmE (445 aa).

Positions 21, 78, and 117 each coordinate (6S)-5-formyl-5,6,7,8-tetrahydrofolate. Residues 213–370 form the TrmE-type G domain; sequence GFRIALVGAP…LKETLSERVV (158 aa). Residues 223–228, 242–248, and 267–270 contribute to the GTP site; these read NAGKST, TATPGTT, and DTAG. Mg(2+) contacts are provided by S227 and T248. K445 is a binding site for (6S)-5-formyl-5,6,7,8-tetrahydrofolate.

It belongs to the TRAFAC class TrmE-Era-EngA-EngB-Septin-like GTPase superfamily. TrmE GTPase family. Homodimer. Heterotetramer of two MnmE and two MnmG subunits. K(+) is required as a cofactor.

It is found in the cytoplasm. Functionally, exhibits a very high intrinsic GTPase hydrolysis rate. Involved in the addition of a carboxymethylaminomethyl (cmnm) group at the wobble position (U34) of certain tRNAs, forming tRNA-cmnm(5)s(2)U34. The sequence is that of tRNA modification GTPase MnmE from Phenylobacterium zucineum (strain HLK1).